The chain runs to 348 residues: MTYNIVALPGDGIGPEILNGSLSLLEIISNKYNFNYQIEHHEFGGASIDTFGEPLTEKTLNACKRADAILLGAIGGPKWTDPNNRPEQGLLKLRKSLNLFANIRPTTVVKGASSLSPLKAERVEGTDLVIVRELTSGIYFGEPRYFNNHEALDSLTYTREEIERIVHVAFKLAASRRGKLTSVDKENVLASSKLWRKVVNEVSQLYPEVTVNHLLVDACSMHLITNPKQFDVIVYENLFGDILSDEASVIPGSLGLSPSASFSNDGPRLYEPIHGSAPDIAGKNVANPFGMILSLAMCLRESLNQPDAADELEQHIYNMIEHGQTTADLGGKLNTTDIFEILSQKLNH.

Residue 76–87 participates in NAD(+) binding; it reads GPKWTDPNNRPE. The substrate site is built by Arg94, Arg104, Arg132, and Asp217. The Mg(2+) site is built by Asp217, Asp241, and Asp245. 275 to 287 contacts NAD(+); that stretch reads GSAPDIAGKNVAN.

It belongs to the isocitrate and isopropylmalate dehydrogenases family. LeuB type 1 subfamily. As to quaternary structure, homodimer. Requires Mg(2+) as cofactor. Mn(2+) serves as cofactor.

The protein localises to the cytoplasm. It carries out the reaction (2R,3S)-3-isopropylmalate + NAD(+) = 4-methyl-2-oxopentanoate + CO2 + NADH. Its pathway is amino-acid biosynthesis; L-leucine biosynthesis; L-leucine from 3-methyl-2-oxobutanoate: step 3/4. Its function is as follows. Catalyzes the oxidation of 3-carboxy-2-hydroxy-4-methylpentanoate (3-isopropylmalate) to 3-carboxy-4-methyl-2-oxopentanoate. The product decarboxylates to 4-methyl-2 oxopentanoate. In Staphylococcus aureus (strain MRSA252), this protein is 3-isopropylmalate dehydrogenase.